A 344-amino-acid polypeptide reads, in one-letter code: Outer membrane protein A (344 aa).

Residues 1–14 lie on the Periplasmic side of the membrane; it reads MKAIFVLNAAPKDN. Residues 15 to 24 form a beta stranded membrane-spanning segment; it reads TWYAGGKLGW. The Extracellular portion of the chain corresponds to 25 to 49; sequence SQYHDTGFYGNGFQNNNGPTRNDQL. A beta stranded membrane pass occupies residues 50-59; the sequence is GAGAFGGYQV. Residues 60 to 62 lie on the Periplasmic side of the membrane; that stretch reads NPY. A beta stranded transmembrane segment spans residues 63–71; that stretch reads LGFEMGYDW. Over 72-89 the chain is Extracellular; the sequence is LGRMAYKGSVDNGAFKAQ. The chain crosses the membrane as a beta stranded span at residues 90-100; it reads GVQLTAKLGYP. Residues 101-104 are Periplasmic-facing; sequence ITDD. A beta stranded membrane pass occupies residues 105-114; it reads LDIYTRLGGM. The Extracellular segment spans residues 115–139; sequence VWRADSKGNYASTGVSRSEHDTGVS. Residues 140–149 traverse the membrane as a beta stranded segment; the sequence is PVFAGGVEWA. The Periplasmic segment spans residues 150–153; it reads VTRD. A beta stranded transmembrane segment spans residues 154–162; the sequence is IATRLEYQW. The Extracellular portion of the chain corresponds to 163 to 179; sequence VNNIGDAGTVGTRPDNG. A beta stranded transmembrane segment spans residues 180–188; that stretch reads MLSLGVSYR. Over 189 to 344 the chain is Periplasmic; it reads FGQEDAAPVV…YKEVVTQPQA (156 aa). 4 consecutive repeat copies span residues 199–200, 201–202, 203–204, and 205–206. A 4 X 2 AA tandem repeats of A-P region spans residues 199–206; the sequence is APAPAPAP. The region spanning 208-336 is the OmpA-like domain; sequence VATKHFTLKS…RVEIEVKGYK (129 aa). Cys-309 and Cys-321 are disulfide-bonded.

It belongs to the outer membrane OOP (TC 1.B.6) superfamily. OmpA family. Monomer and homodimer.

Its subcellular location is the cell outer membrane. Its function is as follows. With TolR probably plays a role in maintaining the position of the peptidoglycan cell wall in the periplasm. Acts as a porin with low permeability that allows slow penetration of small solutes; an internal gate slows down solute passage. Functionally, required for conjugation with F-type plasmids; probably serves as the mating receptor on recipient cells. The protein is Outer membrane protein A of Klebsiella pneumoniae.